A 244-amino-acid chain; its full sequence is Tyrosine recombinase XerD-like (244 aa).

A Core-binding (CB) domain is found at 1-73 (MRDRISAFLE…ACNQFLYFLY (73 aa)). Positions 90 to 244 (AEKKTEKPEI…KTVLTLEKYR (155 aa)) constitute a Tyr recombinase domain. Active-site residues include Lys150 and Arg211. Tyr243 functions as the O-(3'-phospho-DNA)-tyrosine intermediate in the catalytic mechanism.

The protein belongs to the 'phage' integrase family. XerD-like subfamily.

Its subcellular location is the cytoplasm. Functionally, putative tyrosine recombinase. Not involved in the cutting and rejoining of the recombining DNA molecules on dif(SL) site. This Streptococcus pneumoniae serotype 2 (strain D39 / NCTC 7466) protein is Tyrosine recombinase XerD-like.